The chain runs to 333 residues: Fe(3+)-citrate import system permease protein YfmD (333 aa).

The next 9 membrane-spanning stretches (helical) occupy residues Leu-13–Val-33, Thr-67–Met-87, Ile-97–Ala-117, Ser-121–Ala-141, Leu-151–Ile-171, Phe-201–Leu-221, Ile-238–Ile-258, Tyr-279–Ala-299, and Ile-302–Phe-322.

This sequence belongs to the binding-protein-dependent transport system permease family. FecCD subfamily. In terms of assembly, the complex is composed of one ATP-binding protein (YfmF), two transmembrane proteins (YfmD and YfmE) and a solute-binding protein (YfmC).

It localises to the cell membrane. In terms of biological role, part of the ABC transporter complex YfmCDEF involved in citrate-dependent Fe(3+) import. Involved in the translocation of the substrate across the membrane. The sequence is that of Fe(3+)-citrate import system permease protein YfmD (yfmD) from Bacillus subtilis (strain 168).